The following is a 540-amino-acid chain: Glucose-6-phosphate isomerase (540 aa).

The active-site Proton donor is the E346. Residues H377 and K505 contribute to the active site.

The protein belongs to the GPI family.

The protein resides in the cytoplasm. The enzyme catalyses alpha-D-glucose 6-phosphate = beta-D-fructose 6-phosphate. It functions in the pathway carbohydrate biosynthesis; gluconeogenesis. It participates in carbohydrate degradation; glycolysis; D-glyceraldehyde 3-phosphate and glycerone phosphate from D-glucose: step 2/4. In terms of biological role, catalyzes the reversible isomerization of glucose-6-phosphate to fructose-6-phosphate. The chain is Glucose-6-phosphate isomerase from Francisella tularensis subsp. tularensis (strain WY96-3418).